We begin with the raw amino-acid sequence, 90 residues long: Putative membrane protein insertion efficiency factor (90 aa).

Belongs to the UPF0161 family.

Its subcellular location is the cell inner membrane. Functionally, could be involved in insertion of integral membrane proteins into the membrane. The chain is Putative membrane protein insertion efficiency factor from Thermosynechococcus vestitus (strain NIES-2133 / IAM M-273 / BP-1).